Here is a 366-residue protein sequence, read N- to C-terminus: Ribosomal RNA large subunit methyltransferase M (366 aa).

Residues serine 188, 221–224 (CPGG), aspartate 240, aspartate 260, and aspartate 277 contribute to the S-adenosyl-L-methionine site. Residue lysine 306 is the Proton acceptor of the active site.

This sequence belongs to the class I-like SAM-binding methyltransferase superfamily. RNA methyltransferase RlmE family. RlmM subfamily. As to quaternary structure, monomer.

It localises to the cytoplasm. The catalysed reaction is cytidine(2498) in 23S rRNA + S-adenosyl-L-methionine = 2'-O-methylcytidine(2498) in 23S rRNA + S-adenosyl-L-homocysteine + H(+). In terms of biological role, catalyzes the 2'-O-methylation at nucleotide C2498 in 23S rRNA. This Salmonella gallinarum (strain 287/91 / NCTC 13346) protein is Ribosomal RNA large subunit methyltransferase M.